A 181-amino-acid chain; its full sequence is Inner kinetochore subunit MCM16 (181 aa).

The stretch at 112-171 (KQLIESRAERDELMSKLIELSSKFPKPTIPPDDSDTAGKQVEVEKENETIQELMIALQIH) forms a coiled coil.

This sequence belongs to the CENP-H/MCM16 family. In terms of assembly, component of the heterotrimeric kinetochore subcomplex CTF3, which consists of CTF3, MCM16 and MCM22. The CTF3 subcomplex is part of a larger constitutive centromere-associated network (CCAN) (also known as central kinetochore CTF19 complex in yeast), which is composed of at least AME1, CHL4, CNN1, CTF3, CTF19, IML3, MCM16, MCM21, MCM22, MHF1, MHF2, MIF2, NKP1, NKP2, OKP1 and WIP1. Interacts with CTF19.

Its subcellular location is the nucleus. It is found in the chromosome. The protein resides in the centromere. It localises to the kinetochore. In terms of biological role, component of the kinetochore, a multiprotein complex that assembles on centromeric DNA and attaches chromosomes to spindle microtubules, mediating chromosome segregation and sister chromatid segregation during meiosis and mitosis. Component of the inner kinetochore constitutive centromere-associated network (CCAN), which serves as a structural platform for outer kinetochore assembly. The sequence is that of Inner kinetochore subunit MCM16 (MCM16) from Saccharomyces cerevisiae (strain ATCC 204508 / S288c) (Baker's yeast).